Consider the following 585-residue polypeptide: Arginine--tRNA ligase (585 aa).

A 'HIGH' region motif is present at residues 131 to 141 (ANPTGPMHVGH).

The protein belongs to the class-I aminoacyl-tRNA synthetase family. As to quaternary structure, monomer.

Its subcellular location is the cytoplasm. The catalysed reaction is tRNA(Arg) + L-arginine + ATP = L-arginyl-tRNA(Arg) + AMP + diphosphate. This Brucella canis (strain ATCC 23365 / NCTC 10854 / RM-666) protein is Arginine--tRNA ligase.